The primary structure comprises 71 residues: Putative antitoxin VapB14 (71 aa).

Its function is as follows. Putative antitoxin component of a possible type II toxin-antitoxin (TA) system. The cognate toxin is VapB14. In Mycobacterium tuberculosis (strain ATCC 25618 / H37Rv), this protein is Putative antitoxin VapB14 (vapB14).